Here is a 226-residue protein sequence, read N- to C-terminus: UPF0758 protein LL1007 (226 aa).

The 123-residue stretch at 103–225 (QVLSSREYGL…YFSFREEEIR (123 aa)) folds into the MPN domain. The Zn(2+) site is built by His174, His176, and Asp187. The JAMM motif signature appears at 174–187 (HNHPSGNLKPSQAD).

This sequence belongs to the UPF0758 family.

In Lactococcus lactis subsp. lactis (strain IL1403) (Streptococcus lactis), this protein is UPF0758 protein LL1007.